Reading from the N-terminus, the 632-residue chain is 2-hydroxyacyl-CoA lyase 2 (632 aa).

Residues 13–33 (FFPSFLLLAFGTLVAAVLGVA) traverse the membrane as a helical segment. A thiamine diphosphate-binding site is contributed by Glu98. Ser369 is modified (phosphoserine). The tract at residues 470–550 (DFVATAAYLV…VIALVGNDAG (81 aa)) is thiamine pyrophosphate binding. Positions 521 and 547 each coordinate Mg(2+).

It belongs to the TPP enzyme family. Requires Mg(2+) as cofactor. Thiamine diphosphate is required as a cofactor.

It is found in the endoplasmic reticulum membrane. It catalyses the reaction 2-hydroxyoctadecanoyl-CoA = heptadecanal + formyl-CoA. It carries out the reaction (2R)-hydroxyhexadecanoyl-CoA = pentadecanal + formyl-CoA. Functionally, endoplasmic reticulum 2-OH acyl-CoA lyase involved in the cleavage (C1 removal) reaction in the fatty acid alpha-oxydation in a thiamine pyrophosphate (TPP)-dependent manner. Involved in the phytosphingosine degradation pathway. The polypeptide is 2-hydroxyacyl-CoA lyase 2 (Ilvbl) (Mus musculus (Mouse)).